The chain runs to 345 residues: 4-hydroxy-2-oxovalerate aldolase (345 aa).

The Pyruvate carboxyltransferase domain occupies 8 to 260 (ITVHDMTLRD…ETGVDVFKIQ (253 aa)). Substrate is bound at residue 16–17 (RD). Residue aspartate 17 coordinates Mn(2+). Catalysis depends on histidine 20, which acts as the Proton acceptor. Substrate is bound by residues serine 170 and histidine 199. Histidine 199 and histidine 201 together coordinate Mn(2+). Substrate is bound at residue tyrosine 290.

It belongs to the 4-hydroxy-2-oxovalerate aldolase family.

The enzyme catalyses (S)-4-hydroxy-2-oxopentanoate = acetaldehyde + pyruvate. In Leptothrix cholodnii (strain ATCC 51168 / LMG 8142 / SP-6) (Leptothrix discophora (strain SP-6)), this protein is 4-hydroxy-2-oxovalerate aldolase.